A 107-amino-acid chain; its full sequence is Protein RnfH (107 aa).

Residues 82–107 (ARRKRAEKAKEEGRANKVTGGRPIER) form a disordered region.

It belongs to the UPF0125 (RnfH) family.

The polypeptide is Protein RnfH (Pseudoalteromonas translucida (strain TAC 125)).